A 253-amino-acid polypeptide reads, in one-letter code: tRNA pseudouridine synthase A (253 aa).

Aspartate 53 serves as the catalytic Nucleophile. Position 112 (tyrosine 112) interacts with substrate.

Belongs to the tRNA pseudouridine synthase TruA family. In terms of assembly, homodimer.

The catalysed reaction is uridine(38/39/40) in tRNA = pseudouridine(38/39/40) in tRNA. In terms of biological role, formation of pseudouridine at positions 38, 39 and 40 in the anticodon stem and loop of transfer RNAs. The chain is tRNA pseudouridine synthase A from Lactococcus lactis subsp. cremoris (strain MG1363).